The primary structure comprises 374 residues: bZIP transcription factor TRAB1 (374 aa).

Residues 1–13 (MDLKDGGGSERRG) show a composition bias toward basic and acidic residues. 2 disordered regions span residues 1 to 23 (MDLKDGGGSERRGAAAGAGAGAA) and 117 to 142 (ASPGAAAADGGGGGGEQQQPRRQPTL). Residues 14 to 23 (AAAGAGAGAA) are compositionally biased toward low complexity. In terms of domain architecture, bZIP spans 286-349 (VERRQRRMIK…KNFFPEMQKN (64 aa)). The basic motif stretch occupies residues 288–307 (RRQRRMIKNRESAARSRARK). Residues 314–335 (LEAEVQKLKEQNMELQKKQEEI) are leucine-zipper.

It belongs to the bZIP family. Interacts with VP1 (via N-terminus). As to expression, expressed in roots, leaves and embryos.

The protein resides in the nucleus. Functionally, transcription activator that mediates abscisic acid (ABA) signaling. Binds specifically to the ABA-responsive element (ABRE) of the EMP1 and RAB16A gene promoters. This chain is bZIP transcription factor TRAB1, found in Oryza sativa subsp. japonica (Rice).